A 59-amino-acid chain; its full sequence is Large ribosomal subunit protein bL33 (59 aa).

Belongs to the bacterial ribosomal protein bL33 family.

This Borrelia recurrentis (strain A1) protein is Large ribosomal subunit protein bL33.